We begin with the raw amino-acid sequence, 500 residues long: C6 finger domain transcription factor sirZ (500 aa).

A DNA-binding region (zn(2)-C6 fungal-type) is located at residues 28-54 (CNACHEVKLKCLGGQPCARCRNKQVEC). Residues 79-88 (QAKAMSRPEE) are compositionally biased toward basic and acidic residues. 2 disordered regions span residues 79-168 (QAKA…EQIS) and 302-332 (AGSF…GMYQ). Positions 135–147 (GAEEELLDQEERD) are enriched in acidic residues. Over residues 154 to 165 (LVENPPNLNPLE) the composition is skewed to low complexity. Polar residues predominate over residues 304 to 316 (SFSTSGPGSSQEG). A compositionally biased stretch (low complexity) spans 317 to 328 (SHFLSSRHSQSS).

It is found in the nucleus. Its function is as follows. Transcription factor that regulates sirodesmin production and contributes to virulence. Probably binds to the consensus motif TCGGN(3)CCGA found in the promoters of sirT, sirP, sirO, sirN, sirP, sirB, sirR, sirJ and sirQ. The chain is C6 finger domain transcription factor sirZ from Leptosphaeria maculans (Blackleg fungus).